Consider the following 161-residue polypeptide: Transcriptional repressor NrdR (161 aa).

Residues 1 to 11 (MRCPSCNSLDT) are compositionally biased toward polar residues. The tract at residues 1-20 (MRCPSCNSLDTQVKDSRPTE) is disordered. Residues 3–34 (CPSCNSLDTQVKDSRPTEDSSVIRRRRVCVTC) fold into a zinc finger. In terms of domain architecture, ATP-cone spans 49 to 139 (LTVIKRNGRR…VYRNFREAKD (91 aa)).

This sequence belongs to the NrdR family. Zn(2+) serves as cofactor.

Its function is as follows. Negatively regulates transcription of bacterial ribonucleotide reductase nrd genes and operons by binding to NrdR-boxes. This is Transcriptional repressor NrdR from Bradyrhizobium sp. (strain ORS 278).